The following is a 555-amino-acid chain: Potassium-transporting ATPase potassium-binding subunit (555 aa).

The next 10 membrane-spanning stretches (helical) occupy residues I2–I22, Q60–F80, I130–F150, V173–T193, M246–Y266, I278–E298, A374–V394, L412–L432, L483–L503, and G525–L545.

It belongs to the KdpA family. In terms of assembly, the system is composed of three essential subunits: KdpA, KdpB and KdpC.

The protein localises to the cell membrane. Its function is as follows. Part of the high-affinity ATP-driven potassium transport (or Kdp) system, which catalyzes the hydrolysis of ATP coupled with the electrogenic transport of potassium into the cytoplasm. This subunit binds the extracellular potassium ions and delivers the ions to the membrane domain of KdpB through an intramembrane tunnel. The chain is Potassium-transporting ATPase potassium-binding subunit from Bacillus cereus (strain Q1).